The primary structure comprises 237 residues: Eukaryotic translation initiation factor 3 subunit J (237 aa).

The interval 20-64 (ANNINKWEGEDDDEDVKESWEDEEEKKDEEKPTKTEAPAKTKPNK) is disordered. Over residues 28 to 46 (GEDDDEDVKESWEDEEEKK) the composition is skewed to acidic residues. Basic and acidic residues predominate over residues 47-58 (DEEKPTKTEAPA). Residues 63 to 115 (NKVLKAKLLEQECLEKEEEAKRLANMSTEEKLAEKLRLQKIQEESDLKSALET) adopt a coiled-coil conformation.

This sequence belongs to the eIF-3 subunit J family. Component of the eukaryotic translation initiation factor 3 (eIF-3) complex. The eIF-3 complex interacts with pix.

Its subcellular location is the cytoplasm. In terms of biological role, component of the eukaryotic translation initiation factor 3 (eIF-3) complex, which is involved in protein synthesis of a specialized repertoire of mRNAs and, together with other initiation factors, stimulates binding of mRNA and methionyl-tRNAi to the 40S ribosome. The eIF-3 complex specifically targets and initiates translation of a subset of mRNAs involved in cell proliferation. The chain is Eukaryotic translation initiation factor 3 subunit J from Drosophila grimshawi (Hawaiian fruit fly).